The primary structure comprises 223 residues: MDLASLRAQQIELASSVICEDRLDKDPPDLIAGADVGFEQGGEVTRAAMVLLKYPSLELVEYKVARIATTMPYIPGFLSFREYPALLAAWEMLSQKPDLVFVDGHGISHPRRLGVASHFGLLVDVPTIGVAKKRLCGKFEPLSSKPGALAPLMDKGEQLAWVWRSKARCNPLFIATGHRVSVDSALAWVQRCMKGYRLPEPTRWADAVASERPAFVRYTANQP.

2 residues coordinate Mg(2+): Asp-35 and Asp-103.

This sequence belongs to the endonuclease V family. Mg(2+) serves as cofactor.

It localises to the cytoplasm. The catalysed reaction is Endonucleolytic cleavage at apurinic or apyrimidinic sites to products with a 5'-phosphate.. In terms of biological role, DNA repair enzyme involved in the repair of deaminated bases. Selectively cleaves double-stranded DNA at the second phosphodiester bond 3' to a deoxyinosine leaving behind the intact lesion on the nicked DNA. The chain is Endonuclease V from Shigella flexneri serotype 5b (strain 8401).